The following is a 305-amino-acid chain: Coenzyme PQQ synthesis protein B (305 aa).

The protein belongs to the PqqB family.

It functions in the pathway cofactor biosynthesis; pyrroloquinoline quinone biosynthesis. In terms of biological role, may be involved in the transport of PQQ or its precursor to the periplasm. The chain is Coenzyme PQQ synthesis protein B from Cupriavidus taiwanensis (strain DSM 17343 / BCRC 17206 / CCUG 44338 / CIP 107171 / LMG 19424 / R1) (Ralstonia taiwanensis (strain LMG 19424)).